A 969-amino-acid chain; its full sequence is Manganese resistance protein MNR2 (969 aa).

Positions 1–11 are enriched in basic and acidic residues; sequence MSTDNSQKDEG. 4 disordered regions span residues 1–49, 96–153, 167–186, and 199–256; these read MSTD…SRRP, GAFI…DLSP, HKSF…NANN, and VNNN…NNSS. Residues 1 to 912 are Cytoplasmic-facing; it reads MSTDNSQKDE…DMNDVLGKIT (912 aa). The span at 13 to 23 shows a compositional bias: low complexity; sequence PLLSPYSSSPQ. The span at 24 to 36 shows a compositional bias: basic residues; it reads LRKKKRNQKRRKD. Positions 37–48 are enriched in basic and acidic residues; that stretch reads KFVGHLKSDSRR. Residue serine 114 is modified to Phosphoserine. Residues 141–152 are compositionally biased toward polar residues; it reads SDQNRSLVSDLS. Position 175 is a phosphoserine (serine 175). Threonine 177 carries the post-translational modification Phosphothreonine. Serine 182 carries the phosphoserine modification. Low complexity-rich tracts occupy residues 225–234 and 244–256; these read NKNSKSTSSD and SRPS…NNSS. A Phosphoserine modification is found at serine 383. 2 disordered regions span residues 559-662 and 746-769; these read VRRR…KPRE and QSDD…DEDA. Residues 565 to 578 are compositionally biased toward basic and acidic residues; it reads EKQESATLDHESIS. Threonine 571 is subject to Phosphothreonine. Serine 576 and serine 582 each carry phosphoserine. Composition is skewed to low complexity over residues 590–607 and 622–632; these read SNES…ASRS and ANRTTNTSSSS. A compositionally biased stretch (acidic residues) spans 749-769; that stretch reads DSSDSDSSDSDSDSGASDEDA. A helical membrane pass occupies residues 913 to 933; that stretch reads ILGTIVLPMNVITGLWGMNVI. Residues 934–941 are Extracellular-facing; it reads VPGQYRDS. The helical transmembrane segment at 942-962 threads the bilayer; sequence LTWFIGIVLFMCMLACSAYMY. Residues 963–969 lie on the Cytoplasmic side of the membrane; that stretch reads TKRRFGF.

Belongs to the CorA metal ion transporter (MIT) (TC 1.A.35) family.

Its subcellular location is the membrane. This Saccharomyces cerevisiae (strain ATCC 204508 / S288c) (Baker's yeast) protein is Manganese resistance protein MNR2 (MNR2).